Consider the following 374-residue polypeptide: Chaperone protein DnaJ (374 aa).

The 65-residue stretch at 3-67 (DFYQILGVSR…ETRARYDQFG (65 aa)) folds into the J domain. A disordered region spans residues 99–118 (GQSSQGGRSQRRGPQQGDDL). A compositionally biased stretch (low complexity) spans 103-115 (QGGRSQRRGPQQG). Residues 132–214 (GQQREINIPH…CGGNGVKQVR (83 aa)) form a CR-type zinc finger. Residues C145, C148, C162, C165, C188, C191, C202, and C205 each coordinate Zn(2+). 4 CXXCXGXG motif repeats span residues 145-152 (CEVCRGTG), 162-169 (CTTCGGSG), 188-195 (CPTCNGVG), and 202-209 (CTSCGGNG).

Belongs to the DnaJ family. Homodimer. The cofactor is Zn(2+).

It is found in the cytoplasm. Functionally, participates actively in the response to hyperosmotic and heat shock by preventing the aggregation of stress-denatured proteins and by disaggregating proteins, also in an autonomous, DnaK-independent fashion. Unfolded proteins bind initially to DnaJ; upon interaction with the DnaJ-bound protein, DnaK hydrolyzes its bound ATP, resulting in the formation of a stable complex. GrpE releases ADP from DnaK; ATP binding to DnaK triggers the release of the substrate protein, thus completing the reaction cycle. Several rounds of ATP-dependent interactions between DnaJ, DnaK and GrpE are required for fully efficient folding. Also involved, together with DnaK and GrpE, in the DNA replication of plasmids through activation of initiation proteins. The sequence is that of Chaperone protein DnaJ from Prochlorococcus marinus subsp. pastoris (strain CCMP1986 / NIES-2087 / MED4).